Consider the following 124-residue polypeptide: Flowering-promoting factor 1-like protein 1 (124 aa).

Residues 19 to 42 form a disordered region; sequence PYNQSAGDSSESSSSGGNQQQRMR. Low complexity predominate over residues 22–39; sequence QSAGDSSESSSSGGNQQQ.

It belongs to the FPF1 family. Expressed in roots, flowers, and at a low level, in leaves.

In terms of biological role, modulates the competence to flowering of apical meristems. The protein is Flowering-promoting factor 1-like protein 1 (FLP1) of Arabidopsis thaliana (Mouse-ear cress).